The sequence spans 588 residues: MPFNAFDTFKEKILKPGKEGVKNAVGDSLGILQRKLDGTNEEGDAIELSEEGRPVQTSRARAPVCDCSCCGIPKRYIIAVMSGLGFCISFGIRCNLGVAIVEMVNNSTVYVDGKPEIQTAQFNWDPETVGLIHGSFFWGYIVTQIPGGFISNKFAANRVFGAAIFLTSTLNMFIPSAARVHYGCVMCVRILQGLVEGVTYPACHGMWSKWAPPLERSRLATTSFCGSYAGAVVAMPLAGVLVQYIGWASVFYIYGMFGIIWYMFWLLQAYECPAVHPTISNEERTYIETSIGEGANLASLSKFNTPWRRFFTSLPVYAIIVANFCRSWTFYLLLISQPAYFEEVFGFAISKVGLLSAVPHMVMTIVVPIGGQLADYLRSRKILTTTAVRKIMNCGGFGMEATLLLVVGFSHTKGVAISFLVLAVGFSGFAISGFNVNHLDIAPRYASILMGISNGVGTLSGMVCPLIVGAMTKHKTREEWQNVFLIAALVHYSGVIFYGVFASGEKQDWADPENLSEEKCGIIDQDELAEETELNHEAFVSPRKKMSYGATTQNCEVQKTDRRQQRESAFEGEEPLSYQNEEDFSETS.

The Cytoplasmic segment spans residues 1 to 76 (MPFNAFDTFK…CSCCGIPKRY (76 aa)). Residues 77-97 (IIAVMSGLGFCISFGIRCNLG) form a helical membrane-spanning segment. The Vesicular portion of the chain corresponds to 98-130 (VAIVEMVNNSTVYVDGKPEIQTAQFNWDPETVG). Residue Asn-106 is glycosylated (N-linked (GlcNAc...) asparagine). A helical transmembrane segment spans residues 131–151 (LIHGSFFWGYIVTQIPGGFIS). Over 152 to 153 (NK) the chain is Cytoplasmic. The helical transmembrane segment at 154-174 (FAANRVFGAAIFLTSTLNMFI) threads the bilayer. Topologically, residues 175–182 (PSAARVHY) are vesicular. A helical membrane pass occupies residues 183–203 (GCVMCVRILQGLVEGVTYPAC). Over 204 to 221 (HGMWSKWAPPLERSRLAT) the chain is Cytoplasmic. The chain crosses the membrane as a helical span at residues 222-242 (TSFCGSYAGAVVAMPLAGVLV). The Vesicular segment spans residues 243–249 (QYIGWAS). A helical membrane pass occupies residues 250 to 270 (VFYIYGMFGIIWYMFWLLQAY). The Cytoplasmic portion of the chain corresponds to 271 to 314 (ECPAVHPTISNEERTYIETSIGEGANLASLSKFNTPWRRFFTSL). Residues 315–335 (PVYAIIVANFCRSWTFYLLLI) traverse the membrane as a helical segment. Over 336–353 (SQPAYFEEVFGFAISKVG) the chain is Vesicular. The helical transmembrane segment at 354-374 (LLSAVPHMVMTIVVPIGGQLA) threads the bilayer. Residues 375–390 (DYLRSRKILTTTAVRK) lie on the Cytoplasmic side of the membrane. A helical membrane pass occupies residues 391–411 (IMNCGGFGMEATLLLVVGFSH). Residues 412–413 (TK) lie on the Vesicular side of the membrane. The helical transmembrane segment at 414 to 434 (GVAISFLVLAVGFSGFAISGF) threads the bilayer. The Cytoplasmic portion of the chain corresponds to 435–447 (NVNHLDIAPRYAS). The chain crosses the membrane as a helical span at residues 448–468 (ILMGISNGVGTLSGMVCPLIV). Over 469 to 481 (GAMTKHKTREEWQ) the chain is Vesicular. Residues 482 to 502 (NVFLIAALVHYSGVIFYGVFA) traverse the membrane as a helical segment. Residues 503–585 (SGEKQDWADP…LSYQNEEDFS (83 aa)) lie on the Cytoplasmic side of the membrane. The segment at 539–588 (FVSPRKKMSYGATTQNCEVQKTDRRQQRESAFEGEEPLSYQNEEDFSETS) is disordered. The span at 558-569 (QKTDRRQQRESA) shows a compositional bias: basic and acidic residues. Residues 570–588 (FEGEEPLSYQNEEDFSETS) are compositionally biased toward acidic residues.

Belongs to the major facilitator superfamily. Sodium/anion cotransporter family. VGLUT subfamily. As to expression, expressed in brain, kidney and liver. Expressed within the amygdala, brainstem, cerberal cortex, dorsal root ganglia, dorsal spinal cord, hippocampus, hypothalamus, retina, striatum and ventral spinal cord. Expressed within neurons of the caudate-putamen, olfactory tubercle, nucleus accumbens, hippocampus, interpeduncular nucleus and dorsal and medial raphe nuclei. Expressed in inner hair cells of the ear. Expressed at synaptic terminals within the lateral superior olive (LSO), a nucleus of the mammalian sound localization system, and in the medial nucleus of the trapezoid body (MNTB), which provides inhibitory input to the LSO.

Its subcellular location is the cytoplasmic vesicle. The protein resides in the secretory vesicle. It is found in the synaptic vesicle membrane. It localises to the cell membrane. The protein localises to the synapse. Its subcellular location is the synaptosome. It carries out the reaction L-glutamate(out) = L-glutamate(in). It catalyses the reaction chloride(in) = chloride(out). The catalysed reaction is 3 Na(+)(out) + phosphate(out) = 3 Na(+)(in) + phosphate(in). The L-glutamate uniporter activity exhibits a biphasic dependence on chloride concentration. Chloride channel activity is allosterically activated by lumenal H(+) and Cl(-) leading to synaptic vesicles acidification. The glutamate transport activity is allosterically activated by lumenal H(+) and Cl(-), preventing non-vesicular L-glutamate release. In terms of biological role, multifunctional transporter that transports L-glutamate as well as multiple ions such as chloride, sodium and phosphate. At the synaptic vesicle membrane, mainly functions as an uniporter that mediates the uptake of L-glutamate into synaptic vesicles at presynaptic nerve terminals of excitatory neural cells. The L-glutamate uniporter activity is electrogenic and is driven by the proton electrochemical gradient, mainly by the electrical gradient established by the vacuolar H(+)-ATPase across the synaptic vesicle membrane. In addition, functions as a chloride channel that allows a chloride permeation through the synaptic vesicle membrane that affects the proton electrochemical gradient and promotes synaptic vesicles acidification. At the plasma membrane, following exocytosis, functions as a symporter of Na(+) and phosphate from the extracellular space to the cytoplasm allowing synaptic phosphate homeostasis regulation. The symporter activity is electrogenic. Moreover, operates synergistically with SLC18A3/VACHT under a constant H(+) gradient, thereby allowing striatal vesicular acetylcholine uptake. This chain is Vesicular glutamate transporter 3, found in Rattus norvegicus (Rat).